The sequence spans 299 residues: Probable lipid kinase YegS (299 aa).

The DAGKc domain maps to 2-133; that stretch reads AEFPASLLIL…IDMAQVNKQT (132 aa). ATP contacts are provided by residues Thr40, 66–72, and Thr95; that span reads GDGTINE. Residues Leu215, Asp218, and Leu220 each coordinate Mg(2+). The active-site Proton acceptor is Glu271.

It belongs to the diacylglycerol/lipid kinase family. YegS lipid kinase subfamily. Mg(2+) is required as a cofactor. It depends on Ca(2+) as a cofactor.

It localises to the cytoplasm. Its function is as follows. Probably phosphorylates lipids; the in vivo substrate is unknown. The protein is Probable lipid kinase YegS of Shigella dysenteriae serotype 1 (strain Sd197).